The chain runs to 265 residues: Indole-3-glycerol phosphate synthase (265 aa).

This sequence belongs to the TrpC family.

The catalysed reaction is 1-(2-carboxyphenylamino)-1-deoxy-D-ribulose 5-phosphate + H(+) = (1S,2R)-1-C-(indol-3-yl)glycerol 3-phosphate + CO2 + H2O. Its pathway is amino-acid biosynthesis; L-tryptophan biosynthesis; L-tryptophan from chorismate: step 4/5. In Xanthomonas oryzae pv. oryzae (strain MAFF 311018), this protein is Indole-3-glycerol phosphate synthase.